We begin with the raw amino-acid sequence, 316 residues long: Beta-ketoacyl-[acyl-carrier-protein] synthase III 4 (316 aa).

Residues Cys114 and His242 contribute to the active site. The interval 243–247 is ACP-binding; the sequence is QANLR. Asn272 is a catalytic residue.

This sequence belongs to the thiolase-like superfamily. FabH family. Homodimer.

The protein localises to the cytoplasm. It carries out the reaction malonyl-[ACP] + acetyl-CoA + H(+) = 3-oxobutanoyl-[ACP] + CO2 + CoA. It functions in the pathway lipid metabolism; fatty acid biosynthesis. In terms of biological role, catalyzes the condensation reaction of fatty acid synthesis by the addition to an acyl acceptor of two carbons from malonyl-ACP. Catalyzes the first condensation reaction which initiates fatty acid synthesis and may therefore play a role in governing the total rate of fatty acid production. Possesses both acetoacetyl-ACP synthase and acetyl transacylase activities. Its substrate specificity determines the biosynthesis of branched-chain and/or straight-chain of fatty acids. This Streptomyces coelicolor (strain ATCC BAA-471 / A3(2) / M145) protein is Beta-ketoacyl-[acyl-carrier-protein] synthase III 4.